A 675-amino-acid polypeptide reads, in one-letter code: LVRKSCERLYEGRMGVWNGSLKAELRPAEKVLAKKTRSFTAAPLDTLLGAKVCVDDFNNWFYSKNMECPWTVGMTKFYKGWDEFLRKFPDGWVYCDADGSQFDSSLTPYLLNAVLSIRLWAMEDWDIGEQMLKNLYGEITYTPILTPDGTIVKKFKGNNSGQPSTVVDNTLMVLITMYYALRKAGYDTKTQEDMCVFYINGDDLCIAIHPDHEHVLDSFSRSFAELGLKYDFTQRHRNKQNLWFMSHRGILIDDIYIPKLEPERIVAILEWDKSKLPEHRLEAITAAMIESWGYGDLTHQIRRFYQWVLEQAPFNELAKQGRAPYVSEVGLRRLYTSERGSMDELEAYIDKYFERERGDSPELLVYHESRSTDDYQLVCSNNTHVFHQSKNEAVDTGLNEKFKEKEKQKEKEKEKQKEKEKDDASDGNDVSTSTKTGERDRDVNVGTSGTFTVPRIKSFTDKMILPRIKGKSVLNLNHLLQYNPQQIDISNTRATQSQFEKWYEGVRNDYGLNDNEMQVMLNGLMVWCIENGTSPDISGVWVMMDGETQVDYPIKPLIEHATPSFRQIMAHFSNAAEAYIAKRNATERYMPRYGIKRNLTDISLARYAFDFYEVNSKTPDRAREAHMQMKAAALRNTSRRMFGMDGSVSNKEENTERHTVEDVNRDMHSLLGMRN.

In terms of domain architecture, RdRp catalytic spans 92 to 216 (WVYCDADGSQ…AIHPDHEHVL (125 aa)). Residues 390-424 (KNEAVDTGLNEKFKEKEKQKEKEKEKQKEKEKDDA) are compositionally biased toward basic and acidic residues. Residues 390 to 447 (KNEAVDTGLNEKFKEKEKQKEKEKEKQKEKEKDDASDGNDVSTSTKTGERDRDVNVGT) are disordered.

This sequence belongs to the potyviridae genome polyprotein family. Genome polyprotein of potyviruses undergoes post-translational proteolytic processing by the main proteinase NIa-pro resulting in the production of at least ten individual proteins. The P1 proteinase and the HC-pro cleave only their respective C-termini autocatalytically. 6K1 is essential for proper proteolytic separation of P3 from CI.

It is found in the virion. The enzyme catalyses RNA(n) + a ribonucleoside 5'-triphosphate = RNA(n+1) + diphosphate. Its function is as follows. An RNA-dependent RNA polymerase that plays an essential role in the virus replication. In terms of biological role, involved in aphid transmission, cell-to-cell and systemis movement, encapsidation of the viral RNA and in the regulation of viral RNA amplification. This Papaya ringspot virus (strain W) protein is Genome polyprotein.